The sequence spans 331 residues: Glucan endo-1,3-beta-glucosidase, acidic isoform GL161 (331 aa).

The first 9 residues, 1 to 9, serve as a signal peptide directing secretion; the sequence is MCSIQIIGA. Gln10 is modified (pyrrolidone carboxylic acid). Residues Asn55 and Asn75 are each glycosylated (N-linked (GlcNAc...) asparagine). The active-site Nucleophile is the Glu244.

This sequence belongs to the glycosyl hydrolase 17 family. In terms of tissue distribution, is expressed primarily in epidermal cell of healthy plant, and following induction by ethylene, accumulates in mesophyll cells.

It is found in the secreted. It localises to the extracellular space. The catalysed reaction is Hydrolysis of (1-&gt;3)-beta-D-glucosidic linkages in (1-&gt;3)-beta-D-glucans.. Functionally, is thought to be an important plant defense-related product against fungal pathogens. This chain is Glucan endo-1,3-beta-glucosidase, acidic isoform GL161, found in Nicotiana tabacum (Common tobacco).